The chain runs to 178 residues: MIEDAIIVSTLASAALYLIYKTTKKQKVNNQQFIIERWTPETVQESPQSRYIIGNLKQRLQMLFPPPHMTRKKFTGILSMLNNRNIMAEIKLQEGPKSFTINKKQIFLCIKDKKSGDANYYDYNSLIFVTLHEIAHVLCDELGHTQKFQHIFKELLDHASSLGLYDETKPFVKNYCPS.

The protein belongs to the IIV-6 136R family.

This is an uncharacterized protein from Invertebrate iridescent virus 6 (IIV-6).